The sequence spans 467 residues: MPEAGPEAEPGSPRKKIFVKTYGCQMNVYDSARMVDVMAPSGYTEVDAPEDADIVILNTCHIREKAAEKVYSELGRLRELKKEKSGRGEELLIGVAGCVAQAEGEEMRRRAPVVDLVLGPQTYHRLPEYVARLANGGPGIVETEFPVDDKFASLPMAEKRKTLARGATAFLTIQEGCDKFCTFCVVPYTRGSEFSRPVARILDEARSLVDAGVREITLLGQNVNAWHGEDQAGRPATLGYLIRALAEIEGLARLRYTTSHPRDMDEELIAAHRDVPALMPYLHLPVQSGSDRILAAMNRRHDADSYHRIIGRIRAAKPDIALSSDFIVGFPGETEADFEATLDLIRTVGFAQAYSFKYSPRPGTPAATEEDQVPEEVKSERLQRLQALLGEQQLAFNAGCAGRTMPVLFDRRGRGESQLVGRSPYLQSVHIDDAPEHLFGSLVDVVIEEGHRNSLRGRLREEAAVLA.

Residues Lys15–Asn135 enclose the MTTase N-terminal domain. Positions 24, 60, 98, 177, 181, and 184 each coordinate [4Fe-4S] cluster. The Radical SAM core domain maps to Leu163–Ala395. The 64-residue stretch at Ala398–Glu461 folds into the TRAM domain.

The protein belongs to the methylthiotransferase family. MiaB subfamily. Monomer. [4Fe-4S] cluster serves as cofactor.

The protein localises to the cytoplasm. It catalyses the reaction N(6)-dimethylallyladenosine(37) in tRNA + (sulfur carrier)-SH + AH2 + 2 S-adenosyl-L-methionine = 2-methylsulfanyl-N(6)-dimethylallyladenosine(37) in tRNA + (sulfur carrier)-H + 5'-deoxyadenosine + L-methionine + A + S-adenosyl-L-homocysteine + 2 H(+). Functionally, catalyzes the methylthiolation of N6-(dimethylallyl)adenosine (i(6)A), leading to the formation of 2-methylthio-N6-(dimethylallyl)adenosine (ms(2)i(6)A) at position 37 in tRNAs that read codons beginning with uridine. In Parvibaculum lavamentivorans (strain DS-1 / DSM 13023 / NCIMB 13966), this protein is tRNA-2-methylthio-N(6)-dimethylallyladenosine synthase.